We begin with the raw amino-acid sequence, 4568 residues long: Dynein beta chain, flagellar outer arm (4568 aa).

Residues 1-1880 (MAEDEGMTAA…QVNICDAEIA (1880 aa)) are stem. Coiled coils occupy residues 277-293 (FQRL…EAND), 1158-1175 (EEAA…RKAL), 1372-1400 (KIDV…RNYD), 1614-1650 (EACT…RVAF), and 1778-1825 (QEIN…RKKL). Residues 1144-1166 (GVEEEPEYHPDQDPEEAAAKKAA) are disordered. Residues 1150 to 1166 (EYHPDQDPEEAAAKKAA) show a composition bias toward basic and acidic residues. AAA stretches follow at residues 1881-2102 (YSYE…TLYV), 2164-2385 (EAAH…RNFK), 2493-2738 (QYIP…ITQG), and 2841-3090 (EYNE…FRRY). ATP-binding positions include 1919–1926 (GPAGTGKT), 2202–2209 (GAAGCGKT), and 2530–2537 (GNTGTGKS). Residues 2831–2848 (LRKTLEDKLREYNESNAV) are a coiled coil. Position 2879–2886 (2879–2886 (GVGGSGKQ)) interacts with ATP. 3 coiled-coil regions span residues 3106 to 3162 (KMLL…DELI), 3339 to 3425 (KRAA…RLES), and 3648 to 3728 (HERP…KARE). The tract at residues 3106–3425 (KMLLQLKRDD…WGAEIKRLES (320 aa)) is stalk. 2 AAA regions span residues 3481 to 3711 (LTDD…EIEE) and 3937 to 4172 (MGRF…TANN).

It belongs to the dynein heavy chain family. Consists of at least 3 heavy chains (alpha, beta and gamma), 2 intermediate chains and 8 light chains.

The protein localises to the cell projection. Its subcellular location is the cilium. It is found in the flagellum. It localises to the cytoplasm. The protein resides in the cytoskeleton. The protein localises to the flagellum axoneme. Its function is as follows. Force generating protein of eukaryotic cilia and flagella. Produces force towards the minus ends of microtubules. Dynein has ATPase activity; the force-producing power stroke is thought to occur on release of ADP. The chain is Dynein beta chain, flagellar outer arm (ODA4) from Chlamydomonas reinhardtii (Chlamydomonas smithii).